Reading from the N-terminus, the 122-residue chain is Acidic phospholipase A2 CTs-A3 (122 aa).

7 cysteine pairs are disulfide-bonded: Cys26/Cys116, Cys28/Cys44, Cys43/Cys95, Cys49/Cys122, Cys50/Cys88, Cys57/Cys81, and Cys75/Cys86. 3 residues coordinate Ca(2+): Tyr27, Gly29, and Gly31. Residue His47 is part of the active site. Asp48 provides a ligand contact to Ca(2+). Residue Asp89 is part of the active site.

Ca(2+) is required as a cofactor. As to expression, expressed by the venom gland.

Its subcellular location is the secreted. The enzyme catalyses a 1,2-diacyl-sn-glycero-3-phosphocholine + H2O = a 1-acyl-sn-glycero-3-phosphocholine + a fatty acid + H(+). Functionally, snake venom phospholipase A2 (PLA2) that shows a moderate inhibition of ADP-induced human platelet aggregation when tested on platelet rich plasma. Exhibits moderate hydrolytic activities and prefers the anionic micelles (dPPC with deoxycholate) to the zwitterionic micelles (dPPC with Triton X-100). PLA2 catalyzes the calcium-dependent hydrolysis of the 2-acyl groups in 3-sn-phosphoglycerides. In Trimeresurus stejnegeri (Chinese green tree viper), this protein is Acidic phospholipase A2 CTs-A3.